Consider the following 151-residue polypeptide: Small ribosomal subunit protein uS13m (151 aa).

This sequence belongs to the universal ribosomal protein uS13 family. In terms of assembly, component of the mitochondrial small ribosomal subunit (mt-SSU). Mature yeast 74S mitochondrial ribosomes consist of a small (37S) and a large (54S) subunit. The 37S small subunit contains a 15S ribosomal RNA (15S mt-rRNA) and at least 32 different proteins. The 54S large subunit contains a 21S rRNA (21S mt-rRNA) and at least 45 different proteins.

It localises to the mitochondrion. Functionally, component of the mitochondrial ribosome (mitoribosome), a dedicated translation machinery responsible for the synthesis of mitochondrial genome-encoded proteins, including at least some of the essential transmembrane subunits of the mitochondrial respiratory chain. The mitoribosomes are attached to the mitochondrial inner membrane and translation products are cotranslationally integrated into the membrane. This Schizosaccharomyces pombe (strain 972 / ATCC 24843) (Fission yeast) protein is Small ribosomal subunit protein uS13m (sws2).